We begin with the raw amino-acid sequence, 469 residues long: Neuraminidase (469 aa).

Residues 1–6 are Intravirion-facing; the sequence is MNPNQK. A helical transmembrane segment spans residues 7-27; the sequence is IITIGSICMVVGIISLILQIG. Residues 11 to 33 form an involved in apical transport and lipid raft association region; the sequence is GSICMVVGIISLILQIGNIVSIW. The Virion surface portion of the chain corresponds to 28–469; that stretch reads NIVSIWISHS…GAELPFTIDK (442 aa). Positions 36–90 are hypervariable stalk region; the sequence is HSIQTGNQNHTGTCNQSIITYKNSTWVNQTYVNISNTNVVAGKDTTSVILAGNSS. N-linked (GlcNAc...) asparagine; by host glycans are attached at residues asparagine 44, asparagine 50, asparagine 58, asparagine 63, asparagine 68, and asparagine 88. The interval 91-469 is head of neuraminidase; it reads LCPIRGWAIY…GAELPFTIDK (379 aa). 8 disulfide bridges follow: cysteine 92–cysteine 417, cysteine 124–cysteine 129, cysteine 184–cysteine 231, cysteine 233–cysteine 238, cysteine 279–cysteine 292, cysteine 281–cysteine 290, cysteine 318–cysteine 335, and cysteine 421–cysteine 446. Residue arginine 118 participates in substrate binding. Asparagine 146 is a glycosylation site (N-linked (GlcNAc...) asparagine; by host). The Proton donor/acceptor role is filled by aspartate 151. Substrate is bound at residue arginine 152. Asparagine 235 carries N-linked (GlcNAc...) asparagine; by host glycosylation. 277–278 contacts substrate; that stretch reads EE. Residue arginine 293 participates in substrate binding. Residues aspartate 294, glycine 298, aspartate 324, and asparagine 344 each contribute to the Ca(2+) site. A glycan (N-linked (GlcNAc...) asparagine; by host) is linked at asparagine 365. Substrate is bound at residue arginine 368. Tyrosine 402 (nucleophile) is an active-site residue.

It belongs to the glycosyl hydrolase 34 family. As to quaternary structure, homotetramer. The cofactor is Ca(2+). N-glycosylated.

The protein resides in the virion membrane. It is found in the host apical cell membrane. It carries out the reaction Hydrolysis of alpha-(2-&gt;3)-, alpha-(2-&gt;6)-, alpha-(2-&gt;8)- glycosidic linkages of terminal sialic acid residues in oligosaccharides, glycoproteins, glycolipids, colominic acid and synthetic substrates.. Its activity is regulated as follows. Inhibited by the neuraminidase inhibitors zanamivir (Relenza) and oseltamivir (Tamiflu). These drugs interfere with the release of progeny virus from infected cells and are effective against all influenza strains. Resistance to neuraminidase inhibitors is quite rare. Catalyzes the removal of terminal sialic acid residues from viral and cellular glycoconjugates. Cleaves off the terminal sialic acids on the glycosylated HA during virus budding to facilitate virus release. Additionally helps virus spread through the circulation by further removing sialic acids from the cell surface. These cleavages prevent self-aggregation and ensure the efficient spread of the progeny virus from cell to cell. Otherwise, infection would be limited to one round of replication. Described as a receptor-destroying enzyme because it cleaves a terminal sialic acid from the cellular receptors. May facilitate viral invasion of the upper airways by cleaving the sialic acid moieties on the mucin of the airway epithelial cells. Likely to plays a role in the budding process through its association with lipid rafts during intracellular transport. May additionally display a raft-association independent effect on budding. Plays a role in the determination of host range restriction on replication and virulence. Sialidase activity in late endosome/lysosome traffic seems to enhance virus replication. This is Neuraminidase from Aves (Human).